The chain runs to 127 residues: Small ribosomal subunit protein eS8 (127 aa).

The protein belongs to the eukaryotic ribosomal protein eS8 family. In terms of assembly, part of the 30S ribosomal subunit.

In Pyrococcus furiosus (strain ATCC 43587 / DSM 3638 / JCM 8422 / Vc1), this protein is Small ribosomal subunit protein eS8.